The primary structure comprises 142 residues: Large ribosomal subunit protein bL27m (142 aa).

Positions 27–48 (TKKSAGSTKNGRTSQPKNLGLK) are disordered. The segment covering 30-43 (SAGSTKNGRTSQPK) has biased composition (polar residues).

Belongs to the bacterial ribosomal protein bL27 family.

It localises to the mitochondrion. In Dictyostelium discoideum (Social amoeba), this protein is Large ribosomal subunit protein bL27m (mrpl27).